A 521-amino-acid polypeptide reads, in one-letter code: Peroxisomal membrane protein PEX23 (521 aa).

Residues 1 to 26 (MPTDPNSNPVSKAGLTPSSINSNISE) are disordered. Asparagine 23 and asparagine 53 each carry an N-linked (GlcNAc...) asparagine glycan. A run of 2 helical transmembrane segments spans residues 111–128 (SYIS…ILYF) and 133–150 (IYLG…YSIF). Asparagine 189 carries an N-linked (GlcNAc...) asparagine glycan. The chain crosses the membrane as a helical span at residues 198-217 (LLFTSIFLSPGYILVCYLLF). N-linked (GlcNAc...) asparagine glycosylation occurs at asparagine 279. Positions 425–446 (VSPGDDSSTDSASLPHSASETV) are disordered. Over residues 429 to 446 (DDSSTDSASLPHSASETV) the composition is skewed to polar residues. N-linked (GlcNAc...) asparagine glycans are attached at residues asparagine 463 and asparagine 467. Residues 465 to 486 (SGNITTSAETAPDSAGTAKKRK) form a disordered region.

Belongs to the PEX28-32 family. PEX32 subfamily.

It is found in the endoplasmic reticulum membrane. Functionally, with PEX29, contributes to the formation of endoplasmic reticulum-mitochondria junctions which are important for mitochondrial function. Involved in lipid dropplets formation. The sequence is that of Peroxisomal membrane protein PEX23 from Ogataea parapolymorpha (strain ATCC 26012 / BCRC 20466 / JCM 22074 / NRRL Y-7560 / DL-1) (Yeast).